The chain runs to 130 residues: Gloverin (130 aa).

Hemolymph.

The protein resides in the secreted. Its function is as follows. Antibacterial protein active against Gram-negative bacteria. The protein is Gloverin of Hyalophora cecropia (Cecropia moth).